The following is a 540-amino-acid chain: Protein SOSEKI 3 (540 aa).

The tract at residues 32–123 (KKVQIVYYLS…YVLKGSELFD (92 aa)) is DIX-like oligomerization domain. 2 disordered regions span residues 147–201 (EPPS…DAKN) and 219–294 (ADAS…SSLG). 2 stretches are compositionally biased toward low complexity: residues 150–163 (SSRSMDDSSSSSSM) and 185–194 (RSVSSSGVSP). Over residues 221-244 (ASTQTDETVSGRSKTPIETFSRGV) the composition is skewed to polar residues. Residues 246 to 256 (TDEDVSSEPET) are compositionally biased toward acidic residues. The segment covering 280–292 (NSVSPPFSNSASS) has biased composition (low complexity). Positions 342 to 343 (CG) match the Association to cell membranes motif. Positions 412-492 (KKDAADSNAS…KNIPCTTKTH (81 aa)) are disordered. A compositionally biased stretch (polar residues) spans 418-437 (SNASLKRSSSYNGDRASNQM). Positions 471–482 (SEKRRDSSEDTT) are enriched in basic and acidic residues.

Belongs to the SOSEKI family. Homodimer. Forms long polymer filaments with other SOKs proteins polymers (e.g. SOK1, SOK2, SOK3 and SOK4) crucial for polar localization and biological activity. Binds to ANGUSTIFOLIA (AN). Expressed during embryogenesis and in roots.

The protein resides in the cell membrane. SOSEKI proteins (SOK1-5) locally interpret global polarity cues and can influence cell division orientation to coordinate cell polarization relative to body axes, probably by guiding ANGUSTIFOLIA (AN) polarized localization. The polypeptide is Protein SOSEKI 3 (Arabidopsis thaliana (Mouse-ear cress)).